Consider the following 155-residue polypeptide: Ribosome maturation factor RimP (155 aa).

Belongs to the RimP family.

It localises to the cytoplasm. Its function is as follows. Required for maturation of 30S ribosomal subunits. The polypeptide is Ribosome maturation factor RimP (Prochlorococcus marinus (strain SARG / CCMP1375 / SS120)).